The following is a 1025-amino-acid chain: Beta-galactosidase (1025 aa).

Positions 105 and 204 each coordinate substrate. Aspartate 204 is a Na(+) binding site. Residues glutamate 417, histidine 419, and glutamate 462 each contribute to the Mg(2+) site. Residues glutamate 462 and 538-541 contribute to the substrate site; that span reads EYAH. Glutamate 462 acts as the Proton donor in catalysis. Residue glutamate 538 is the Nucleophile of the active site. Asparagine 598 serves as a coordination point for Mg(2+). Residues phenylalanine 602 and asparagine 605 each coordinate Na(+). Residues asparagine 605 and tryptophan 1003 each contribute to the substrate site.

Belongs to the glycosyl hydrolase 2 family. Homotetramer. Mg(2+) serves as cofactor. Na(+) is required as a cofactor.

It catalyses the reaction Hydrolysis of terminal non-reducing beta-D-galactose residues in beta-D-galactosides.. The protein is Beta-galactosidase of Aeromonas hydrophila subsp. hydrophila (strain ATCC 7966 / DSM 30187 / BCRC 13018 / CCUG 14551 / JCM 1027 / KCTC 2358 / NCIMB 9240 / NCTC 8049).